Reading from the N-terminus, the 369-residue chain is MAFDRIEDIIEDYRQGKMVLLVDDEDRENEGDLLLAADCCTAQAISFMAREARGLICLTLTDEHCKSLGLEQMVPSNGSVFATAFTVSIEATTGVTTGISAADRARTVQAAVNPGAVPDDLVQPGHIFPLRARDGGVLTRAGHTEAGCDLARMAGFTPASVIVEVMNDDGTMARRPDLELFAEKHGIRIGTIADLIHYRLSTEHTIVRIGERELPTVHGTFRLFSYEDRIEGGVHMAMVMGDIRREDPTLVRVHVVDPLRDLVGAEYTGPANWTLWAALQRVAEEGCGVVVVLANHESSQALLERIPQLTQPPRQYTRSQSRIYSEVGTGAQILQDLGIGKLRHLGPPLKYAGLTGYDLEVIESIPFPG.

Residues 1-201 (MAFDRIEDII…IADLIHYRLS (201 aa)) form a DHBP synthase region. D-ribulose 5-phosphate-binding positions include 27–28 (RE), Asp32, 140–144 (RAGHT), and Glu164. Glu28 contributes to the Mg(2+) binding site. His143 is a Mg(2+) binding site. Positions 202–369 (TEHTIVRIGE…EVIESIPFPG (168 aa)) are GTP cyclohydrolase II-like.

This sequence in the N-terminal section; belongs to the DHBP synthase family. The protein in the C-terminal section; belongs to the GTP cyclohydrolase II family. Requires Mg(2+) as cofactor. Mn(2+) serves as cofactor.

It carries out the reaction D-ribulose 5-phosphate = (2S)-2-hydroxy-3-oxobutyl phosphate + formate + H(+). It participates in cofactor biosynthesis; riboflavin biosynthesis; 2-hydroxy-3-oxobutyl phosphate from D-ribulose 5-phosphate: step 1/1. Its function is as follows. Catalyzes the conversion of D-ribulose 5-phosphate to formate and 3,4-dihydroxy-2-butanone 4-phosphate. This Pseudomonas syringae pv. tomato (strain ATCC BAA-871 / DC3000) protein is 3,4-dihydroxy-2-butanone 4-phosphate synthase (ribB).